A 760-amino-acid polypeptide reads, in one-letter code: Polyribonucleotide nucleotidyltransferase (760 aa).

Residues D492 and D498 each contribute to the Mg(2+) site. The region spanning 559–618 (PQHAEVFVNPDIIRIIIGPGGKNIKAITATTGASIDIEDSGRVSIFAPTLEAMEMAREMV) is the KH domain. The S1 motif domain occupies 628 to 702 (GKNYTGKVRK…SRKAVLLEEQ (75 aa)). The disordered stretch occupies residues 706 to 760 (WKPEDTARPSGPREGGRRDGGRDGRRDGGRDGRRDGGRDGGRRDGGRRDGGRDRN). Residues 719–760 (EGGRRDGGRDGRRDGGRDGRRDGGRDGGRRDGGRRDGGRDRN) show a composition bias toward basic and acidic residues.

Belongs to the polyribonucleotide nucleotidyltransferase family. The cofactor is Mg(2+).

It localises to the cytoplasm. It catalyses the reaction RNA(n+1) + phosphate = RNA(n) + a ribonucleoside 5'-diphosphate. Involved in mRNA degradation. Catalyzes the phosphorolysis of single-stranded polyribonucleotides processively in the 3'- to 5'-direction. This is Polyribonucleotide nucleotidyltransferase from Nitratidesulfovibrio vulgaris (strain ATCC 29579 / DSM 644 / CCUG 34227 / NCIMB 8303 / VKM B-1760 / Hildenborough) (Desulfovibrio vulgaris).